The primary structure comprises 249 residues: tRNA uridine(34) hydroxylase (249 aa).

Positions 124-218 (TKQDVIVIDT…YLEDTQNKNN (95 aa)) constitute a Rhodanese domain. C178 (cysteine persulfide intermediate) is an active-site residue.

It belongs to the TrhO family.

The catalysed reaction is uridine(34) in tRNA + AH2 + O2 = 5-hydroxyuridine(34) in tRNA + A + H2O. Functionally, catalyzes oxygen-dependent 5-hydroxyuridine (ho5U) modification at position 34 in tRNAs. This chain is tRNA uridine(34) hydroxylase, found in Rickettsia canadensis (strain McKiel).